A 622-amino-acid polypeptide reads, in one-letter code: Probable potassium transport system protein Kup (622 aa).

The next 12 membrane-spanning stretches (helical) occupy residues 8–28 (LAALTLGAIGVVYGDIGTSVL), 50–70 (ILSIFFWTLTVIVSLKYVVLV), 103–123 (LAVGIFGTSLFYGDGVITPAI), 137–157 (PHFKKYVIPITLVVLFCLFAV), 168–188 (FFGPITLVWFASIALLGLAHI), 203–223 (ALGFMFANPGTSFIILGAVVL), 247–267 (WFGVAMPALTLNYFGQGALLL), 285–305 (ALIPLVVLATMATVIASQALI), 337–357 (IYMPLVNWGLFVAIVLAVVMF), 366–386 (AYGIAVTLDMLITTTLTFFVI), 393–413 (PLALCVAATGCFAVVDLAFFA), and 419–439 (LFQGGWFPLMIGGIVFALMMT).

It belongs to the HAK/KUP transporter (TC 2.A.72) family.

It localises to the cell inner membrane. The catalysed reaction is K(+)(in) + H(+)(in) = K(+)(out) + H(+)(out). In terms of biological role, transport of potassium into the cell. Likely operates as a K(+):H(+) symporter. This chain is Probable potassium transport system protein Kup, found in Verminephrobacter eiseniae (strain EF01-2).